The primary structure comprises 712 residues: Small ribosomal subunit protein uS3c (712 aa).

Positions 1–118 are S3-like 1st part; it reads MGQKVHPLGF…IKVSKDLVTN (118 aa). The interval 119–580 is intervening sequence (IVS); it reads LQKTRKYLFK…LQTAFLTQIE (462 aa). Positions 581–712 are S3-like 2nd part; that stretch reads SQRKMYKANL…VWIFKGYSKI (132 aa).

Belongs to the universal ribosomal protein uS3 family. In terms of assembly, part of the 30S ribosomal subunit.

It localises to the plastid. It is found in the chloroplast. In Chlamydomonas reinhardtii (Chlamydomonas smithii), this protein is Small ribosomal subunit protein uS3c (rps3).